We begin with the raw amino-acid sequence, 342 residues long: MPVNLKGRSLDSLLNFTTEEVQHLIDLSIDLKKAKYQGLHINNRPLVGKNIAILFQKDSTRTRCAFEVAASDLGAGVTYIGPSGSNMGKKESIEDTAKVLGRFYDGIEFRGFAQSDVDALVKYSGVPVWNGLTDDEHPTQIIADFMTMKEKFGNLKNKKIVFIGDYKNNVGVSTMIGAAFNGMHVVMCGPDNYKNEIDKNVLAKCIELFKRNGGSLRFSTDKILAAQDADVIYTDVWVSLGEPFELFDKRIGELKNFQVDMNMIKAAKNDVIFLHCLPAFHDDHTSFSKEVATTLGAKYPIVAKGEMEVTDEVFQSLHNKAFDQAENRMHSIKAIILSTIGY.

Residues 59–62 (STRT), Ser-83, Arg-110, and 137–140 (HPTQ) each bind carbamoyl phosphate. Residues Asn-169, Asp-235, and 239 to 240 (SL) each bind L-ornithine. Residues 276 to 277 (CL) and Arg-328 each bind carbamoyl phosphate.

Belongs to the aspartate/ornithine carbamoyltransferase superfamily. OTCase family. Dodecamer (tetramer of trimers).

It localises to the cytoplasm. It catalyses the reaction carbamoyl phosphate + L-ornithine = L-citrulline + phosphate + H(+). It functions in the pathway amino-acid degradation; L-arginine degradation via ADI pathway; carbamoyl phosphate from L-arginine: step 2/2. In terms of biological role, nvolved in the catabolism of arginine. Catalyzes the phosphorolysis of citrulline, the reverse reaction of the biosynthetic one, yielding ornithine and carbamoyl phosphate which serve to generate ATP from ADP. This Malacoplasma penetrans (strain HF-2) (Mycoplasma penetrans) protein is Ornithine carbamoyltransferase, catabolic (arcB).